The sequence spans 395 residues: Beta-1,4-galactosyltransferase 3 (395 aa).

At 1–10 (MLRRLLERPC) the chain is on the cytoplasmic side. Residues 11 to 31 (TLALLVGSQLAVMMYLSLGGF) form a helical; Signal-anchor for type II membrane protein membrane-spanning segment. The Lumenal segment spans residues 32-395 (RSLSALFGRD…ANHTAPRGSH (364 aa)). Asn-57 carries an N-linked (GlcNAc...) asparagine glycan. The cysteines at positions 79 and 121 are disulfide-linked. 132–136 (PHRAR) is a UDP-alpha-D-galactose binding site. Asn-168 carries an N-linked (GlcNAc...) asparagine glycan. Residues 171–173 (FNR), 198–199 (VD), Tyr-228, and Trp-260 contribute to the UDP-alpha-D-galactose site. The cysteines at positions 192 and 211 are disulfide-linked. Mn(2+) is bound at residue Asp-199. 262-265 (GEDD) contacts N-acetyl-D-glucosamine. His-293 lines the Mn(2+) pocket. UDP-alpha-D-galactose is bound at residue 293-295 (HRG). Arg-305 contributes to the N-acetyl-D-glucosamine binding site. Residue Asn-339 is glycosylated (N-linked (GlcNAc...) asparagine). The interval 340 to 395 (ITADIGTDPRGPRSPSGPRYPPGSSQAFRQEMLQRRPPARPGPLPTANHTAPRGSH) is disordered. Positions 352–364 (RSPSGPRYPPGSS) are enriched in low complexity. The N-linked (GlcNAc...) asparagine glycan is linked to Asn-387.

The protein belongs to the glycosyltransferase 7 family. The cofactor is Mn(2+).

The protein resides in the golgi apparatus. It is found in the golgi stack membrane. The enzyme catalyses an N-acetyl-beta-D-glucosaminyl derivative + UDP-alpha-D-galactose = a beta-D-galactosyl-(1-&gt;4)-N-acetyl-beta-D-glucosaminyl derivative + UDP + H(+). It catalyses the reaction N-acetyl-D-glucosamine + UDP-alpha-D-galactose = beta-D-galactosyl-(1-&gt;4)-N-acetyl-D-glucosamine + UDP + H(+). The catalysed reaction is a beta-D-GlcNAc-(1-&gt;3)-beta-D-Gal-(1-&gt;4)-beta-D-Glc-(1&lt;-&gt;1)-Cer(d18:1(4E)) + UDP-alpha-D-galactose = a neolactoside nLc4Cer(d18:1(4E)) + UDP + H(+). It carries out the reaction a beta-D-glucosylceramide + UDP-alpha-D-galactose = a beta-D-galactosyl-(1-&gt;4)-beta-D-glucosyl-(1&lt;-&gt;1)-ceramide + UDP + H(+). The enzyme catalyses a neolactoside IV(3)-beta-GlcNAc-nLc4Cer + UDP-alpha-D-galactose = a neolactoside nLc6Cer + UDP + H(+). The protein operates within protein modification; protein glycosylation. In terms of biological role, responsible for the synthesis of complex-type N-linked oligosaccharides in many glycoproteins as well as the carbohydrate moieties of glycolipids. In Mus musculus (Mouse), this protein is Beta-1,4-galactosyltransferase 3.